The sequence spans 1197 residues: MAGHEVRYGKHRTRRSFSRIKEVLDLPNLIEIQTDSFQDFLDSGLKEVFEDVLPISNFTDTMELEFVGYEFKEPKYTLEEARIHDASYSAPIFVTFRLVNKETGEIKTQEVFFGDFPIMTEMGTFIINGGERIIVSQLVRSPGVYFNDKVDKNGKVGYGSTVIPNRGAWLELETDSKDIAYTRIDRTRKIPFTTLVRALGFSGDDEIVDIFGESDLVRNTIEKDIHKNPSDSRTDEALKEIYERLRPGEPKTADSSRSLLIARFFDARRYDLAAVGRYKVNKKLNIKTRLLNQIIAENLVDAETGEILVEAGTEMTRSVIESIEEHLDGDLNKFVYTPNDYAVVTEPVVLQKFKVVSPIDPDRVVTIVGNANPDDKVRALTPADILAEMSYFLNLAEGLGKVDDIDHLGNRRIRAVGELLANQFRIGLARMERNVRERMSVQDNDVLTPQQIINIRPVTAAVKEFFGSSQLSQFMDQHNPLSELSHKRRLSALGPGGLTRDRAGYEVRDVHYTHYGRMCPIETPEGPNIGLINNLSSFGHLNKYGFIQTPYRKVDRATGRVTNEIVWLTADEEDEYTVAQANSKLNEDGTFAEEIVMGRHQGNNQEFSASVVDFVDVSPKQVVAVATACIPFLENDDSNRALMGANMQRQAVPLIDPKAPYVGTGMEYQAAHDSGAAVIAQHNGKVVFSDAEKVEIRRQDGSLDVYHITKFRRSNSGTAYNQRTLVKVGDIVEKGDFIADGPSMENGEMALGQNPVVAYMTWEGYNFEDAVIMSERLVKEDVYTSVHLEEFESETRDTKLGPEEITREIPNVGEEALKDLDEMGIIRIGAEVKEGDILVGKVTPKGEKDLSAEERLLHAIFGDKSREVRDTSLRVPHGGDGIVRDVKIFTRANGDELQSGVNMLVRVYIAQKRKIKVGDKMAGRHGNKGVVSRIVPKGVVSRIVPVEDMPYLPDGTPVDIMLNPLGVPSRMNIGQVMELHLGMAARNLGIHIATPVFDGASSEDLWDTVREAGMDSDAKTVLYDGRTGEPFDNRVSVGVMYMIKLHHMVDDKLHARSVGPYSLVTQQPLGGKAQFGGQRFGEMEVWALEAYGASNVLQEILTYKSDDVTGRLKAYEAITKGKPIPKPGVPESFRVLVKELQSLGLDMRVLDEDDNEVELRDLDEGEDDDIMHVDDLEKAREKQAQETQEVSETTDEK.

This sequence belongs to the RNA polymerase beta chain family. The RNAP catalytic core consists of 2 alpha, 1 beta, 1 beta' and 1 omega subunit. When a sigma factor is associated with the core the holoenzyme is formed, which can initiate transcription.

It catalyses the reaction RNA(n) + a ribonucleoside 5'-triphosphate = RNA(n+1) + diphosphate. DNA-dependent RNA polymerase catalyzes the transcription of DNA into RNA using the four ribonucleoside triphosphates as substrates. The protein is DNA-directed RNA polymerase subunit beta of Streptococcus pyogenes serotype M12 (strain MGAS9429).